Reading from the N-terminus, the 127-residue chain is Protein YwpG (127 aa).

In terms of assembly, interacts with both the D1 and D2 domains of dynamin-like protein DynA.

It localises to the cell membrane. This chain is Protein YwpG (ywpG), found in Bacillus subtilis (strain 168).